Here is an 81-residue protein sequence, read N- to C-terminus: Cytochrome b559 subunit alpha (81 aa).

The helical transmembrane segment at 21–35 (IIHSITIPMLFIAGW) threads the bilayer. Heme is bound at residue histidine 23.

This sequence belongs to the PsbE/PsbF family. As to quaternary structure, heterodimer of an alpha subunit and a beta subunit. PSII is composed of 1 copy each of membrane proteins PsbA, PsbB, PsbC, PsbD, PsbE, PsbF, PsbH, PsbI, PsbJ, PsbK, PsbL, PsbM, PsbT, PsbX, PsbY, PsbZ, Psb30/Ycf12, peripheral proteins PsbO, CyanoQ (PsbQ), PsbU, PsbV and a large number of cofactors. It forms dimeric complexes. It depends on heme b as a cofactor.

It localises to the cellular thylakoid membrane. This b-type cytochrome is tightly associated with the reaction center of photosystem II (PSII). PSII is a light-driven water:plastoquinone oxidoreductase that uses light energy to abstract electrons from H(2)O, generating O(2) and a proton gradient subsequently used for ATP formation. It consists of a core antenna complex that captures photons, and an electron transfer chain that converts photonic excitation into a charge separation. The chain is Cytochrome b559 subunit alpha from Microcystis aeruginosa (strain NIES-843 / IAM M-2473).